The following is a 1151-amino-acid chain: Sterol regulatory element-binding protein 1 (1151 aa).

Positions M1 to D59 are transcriptional activation (acidic). Over M1 to R487 the chain is Cytoplasmic. The short motif at T27–L35 is the 9aaTAD element. Disordered regions lie at residues Q39 to E125 and G164 to T184. Residues G57 to G69 show a composition bias toward low complexity. A compositionally biased stretch (pro residues) spans T91 to T105. A phosphoserine mark is found at S98 and S117. Polar residues predominate over residues G170–T184. The interval Q234–C497 is interaction with LMNA. The 51-residue stretch at E324–L374 folds into the bHLH domain. Phosphoserine; by SIK1 is present on residues S338 and S339. The interval L374–K396 is leucine-zipper. Phosphoserine; by AMPK is present on S397. Positions K399–G479 are disordered. S403 bears the Phosphoserine; by SIK1 mark. Low complexity predominate over residues D431–S448. S457 is modified (phosphoserine). Residues L488 to G508 traverse the membrane as a helical segment. Residues S509–P547 are Lumenal-facing. Residues L548 to G568 traverse the membrane as a helical segment. Topologically, residues E569 to S1151 are cytoplasmic. Residues R987–A1006 are disordered. Over residues Q995 to A1006 the composition is skewed to low complexity. At S1060 the chain carries Phosphoserine.

It belongs to the SREBP family. Efficient DNA binding of the soluble transcription factor fragment requires dimerization with another bHLH protein. Interacts with CEBPA, the interaction produces a transcriptional synergy. Interacts with LMNA. As to quaternary structure, forms a tight complex with SCAP, the SCAP-SREBP complex, in the endoplasmic reticulum membrane and the Golgi apparatus. Interacts with PAQR3; the interaction anchors the SCAP-SREBP complex to the Golgi apparatus in low cholesterol conditions. Post-translationally, processed in the Golgi apparatus, releasing the protein from the membrane. At low cholesterol the SCAP-SREBP complex is recruited into COPII vesicles for export from the endoplasmic reticulum. In the Golgi, complex SREBPs are cleaved sequentially by site-1 (MBTPS1, S1P) and site-2 (MBTPS2, S2P) proteases. The first cleavage by site-1 protease occurs within the luminal loop, the second cleavage by site-2 protease occurs within the first transmembrane domain, releasing the transcription factor from the Golgi membrane. Phosphorylated by AMPK, leading to suppress protein processing and nuclear translocation, and repress target gene expression. Phosphorylation at Ser-403 by SIK1 represses activity possibly by inhibiting DNA-binding. In terms of processing, SCAP-free SREBF1 is ubiquitinated by the BCR(ARMC5) complex, leading to its degradation. Post-translationally, ubiquitinated; the nuclear form has a rapid turnover and is rapidly ubiquitinated and degraded by the proteasome in the nucleus.

It is found in the endoplasmic reticulum membrane. Its subcellular location is the golgi apparatus membrane. The protein resides in the cytoplasmic vesicle. It localises to the COPII-coated vesicle membrane. The protein localises to the nucleus. Its activity is regulated as follows. Activation by cleavage is down-regulated upon activation of SIRT3-dependent PRKAA1/AMPK-alpha signaling cascade which leads to inhibition of ATP-consuming lipogenesis to restore cellular energy balance. In terms of biological role, precursor of the transcription factor form (Processed sterol regulatory element-binding protein 1), which is embedded in the endoplasmic reticulum membrane. Low sterol concentrations promote processing of this form, releasing the transcription factor form that translocates into the nucleus and activates transcription of genes involved in cholesterol biosynthesis and lipid homeostasis. Functionally, key transcription factor that regulates expression of genes involved in cholesterol biosynthesis and lipid homeostasis. Binds to the sterol regulatory element 1 (SRE-1) (5'-ATCACCCCAC-3'). Has dual sequence specificity binding to both an E-box motif (5'-ATCACGTGA-3') and to SRE-1 (5'-ATCACCCCAC-3'). Regulates the promoters of genes involved in cholesterol biosynthesis and the LDL receptor (LDLR) pathway of sterol regulation. This is Sterol regulatory element-binding protein 1 (SREBF1) from Sus scrofa (Pig).